The chain runs to 267 residues: Tryptophan synthase alpha chain (267 aa).

Catalysis depends on proton acceptor residues Glu47 and Asp58.

Belongs to the TrpA family. In terms of assembly, tetramer of two alpha and two beta chains.

It carries out the reaction (1S,2R)-1-C-(indol-3-yl)glycerol 3-phosphate + L-serine = D-glyceraldehyde 3-phosphate + L-tryptophan + H2O. Its pathway is amino-acid biosynthesis; L-tryptophan biosynthesis; L-tryptophan from chorismate: step 5/5. Functionally, the alpha subunit is responsible for the aldol cleavage of indoleglycerol phosphate to indole and glyceraldehyde 3-phosphate. This is Tryptophan synthase alpha chain from Chlorobaculum parvum (strain DSM 263 / NCIMB 8327) (Chlorobium vibrioforme subsp. thiosulfatophilum).